The chain runs to 190 residues: Small ribosomal subunit protein uS5 (190 aa).

The region spanning 22–85 is the S5 DRBM domain; it reads FVDKLVHINR…DSAKRNLTRV (64 aa).

The protein belongs to the universal ribosomal protein uS5 family. Part of the 30S ribosomal subunit. Contacts proteins S4 and S8.

Its function is as follows. With S4 and S12 plays an important role in translational accuracy. Located at the back of the 30S subunit body where it stabilizes the conformation of the head with respect to the body. The chain is Small ribosomal subunit protein uS5 from Bradyrhizobium sp. (strain BTAi1 / ATCC BAA-1182).